The following is a 594-amino-acid chain: Elongation factor 4 (594 aa).

In terms of domain architecture, tr-type G spans 2–184; it reads KNIRNFSIIA…TIVAKVPAPE (183 aa). GTP contacts are provided by residues 14–19 and 131–134; these read DHGKST and NKID.

This sequence belongs to the TRAFAC class translation factor GTPase superfamily. Classic translation factor GTPase family. LepA subfamily.

The protein resides in the cell inner membrane. The enzyme catalyses GTP + H2O = GDP + phosphate + H(+). Required for accurate and efficient protein synthesis under certain stress conditions. May act as a fidelity factor of the translation reaction, by catalyzing a one-codon backward translocation of tRNAs on improperly translocated ribosomes. Back-translocation proceeds from a post-translocation (POST) complex to a pre-translocation (PRE) complex, thus giving elongation factor G a second chance to translocate the tRNAs correctly. Binds to ribosomes in a GTP-dependent manner. The chain is Elongation factor 4 from Francisella tularensis subsp. novicida (strain U112).